We begin with the raw amino-acid sequence, 330 residues long: Ubiquinone biosynthesis protein COQ4, mitochondrial (330 aa).

The N-terminal 31 residues, 1–31 (MLQSTKVTKSVLTNVLRVEQRRGFLLSGAAV), are a transit peptide targeting the mitochondrion. Residues H212, D213, H216, and E228 each contribute to the Zn(2+) site.

It belongs to the COQ4 family. Component of a multi-subunit COQ enzyme complex, composed of at least COQ3, COQ4, COQ5, COQ6, COQ7 and COQ9. The cofactor is Zn(2+).

Its subcellular location is the mitochondrion inner membrane. The enzyme catalyses a 4-hydroxy-3-methoxy-5-(all-trans-polyprenyl)benzoate + H(+) = a 2-methoxy-6-(all-trans-polyprenyl)phenol + CO2. Its pathway is cofactor biosynthesis; ubiquinone biosynthesis. Its function is as follows. Lyase that catalyzes the C1-decarboxylation of 4-hydroxy-3-methoxy-5-(all-trans-polyprenyl)benzoic acid into 2-methoxy-6-(all-trans-polyprenyl)phenol during ubiquinone biosynthesis. This chain is Ubiquinone biosynthesis protein COQ4, mitochondrial, found in Candida glabrata (strain ATCC 2001 / BCRC 20586 / JCM 3761 / NBRC 0622 / NRRL Y-65 / CBS 138) (Yeast).